We begin with the raw amino-acid sequence, 91 residues long: RNA-binding protein Hfq (91 aa).

The region spanning 9–68 is the Sm domain; the sequence is DPYLNALRRERIPVSIYLVNGIKLQGQIESFDQFVILLKNTVNQMVYKHAISTVVPARSV. A disordered region spans residues 68 to 91; that stretch reads VSHHNNNHHTTPTEAVENVETQAE.

It belongs to the Hfq family. As to quaternary structure, homohexamer.

In terms of biological role, RNA chaperone that binds small regulatory RNA (sRNAs) and mRNAs to facilitate mRNA translational regulation in response to envelope stress, environmental stress and changes in metabolite concentrations. Also binds with high specificity to tRNAs. The chain is RNA-binding protein Hfq from Haemophilus influenzae (strain 86-028NP).